A 337-amino-acid polypeptide reads, in one-letter code: Integrase/recombinase (337 aa).

One can recognise a Core-binding (CB) domain in the interval Val14–Leu94. In terms of domain architecture, Tyr recombinase spans Arg112–Asp328. Active-site residues include Arg146, Lys171, His277, Arg280, and His303. Residue Tyr312 is the O-(3'-phospho-DNA)-tyrosine intermediate of the active site.

Belongs to the 'phage' integrase family.

In terms of biological role, putative integrase believed to be involved in the insertion of antibiotic resistance genes into plasmids and transposons. This chain is Integrase/recombinase (int), found in Escherichia coli.